Consider the following 37-residue polypeptide: Ferredoxin--NADP reductase, chloroplastic (37 aa).

NADP(+)-binding positions include S3 and 24–25; that span reads SR.

It belongs to the ferredoxin--NADP reductase type 1 family. Requires FAD as cofactor.

Its subcellular location is the plastid. The protein resides in the chloroplast stroma. The protein localises to the chloroplast thylakoid membrane. The enzyme catalyses 2 reduced [2Fe-2S]-[ferredoxin] + NADP(+) + H(+) = 2 oxidized [2Fe-2S]-[ferredoxin] + NADPH. Its pathway is energy metabolism; photosynthesis. In terms of biological role, may play a key role in regulating the relative amounts of cyclic and non-cyclic electron flow to meet the demands of the plant for ATP and reducing power. This is Ferredoxin--NADP reductase, chloroplastic from Imperata cylindrica (Cogon grass).